Reading from the N-terminus, the 312-residue chain is Isethionate sulfite-lyase activating enzyme (312 aa).

The Radical SAM core domain occupies 20-304 (HDGPGIRTIV…GLQKTALDIL (285 aa)). C34, C38, C41, C60, C66, C69, C73, C93, C96, C100, and C104 together coordinate [4Fe-4S] cluster. 40–42 (WCS) is an S-adenosyl-L-methionine binding site. 2 consecutive 4Fe-4S ferredoxin-type domains span residues 51–83 (AELACNPGRCIDISKCGHCLTACPHGAITCGDD) and 84–115 (DKPRIDRSHCADCSIPCAEVCPAQGLLVYGKK). S-adenosyl-L-methionine contacts are provided by residues G144, 193 to 195 (DIK), and H267.

It belongs to the organic radical-activating enzymes family. In terms of assembly, monomer. [4Fe-4S] cluster serves as cofactor.

The catalysed reaction is glycyl-[protein] + reduced [flavodoxin] + S-adenosyl-L-methionine = glycin-2-yl radical-[protein] + semiquinone [flavodoxin] + 5'-deoxyadenosine + L-methionine + H(+). The protein operates within organosulfur degradation; alkanesulfonate degradation. Involved in an anaerobic respiration pathway that converts the sulfonate isethionate (2-hydroxyethanesulfonate) to ammonia, acetate and sulfide. Catalyzes activation of the isethionate sulfite-lyase IslA under anaerobic conditions by generation of an organic free radical on a glycine residue, via a homolytic cleavage of S-adenosyl-L-methionine (SAM). This is Isethionate sulfite-lyase activating enzyme from Desulfovibrio desulfuricans (strain ATCC 27774 / DSM 6949 / MB).